Reading from the N-terminus, the 7182-residue chain is MIKTSKYGLGFKWAPEFRWLLPDAAEELASPMKSDEGGLCPSTGQAMESVGFVYDNHVKIDCRCILGQEWHVQSNLIRDIFVHEDLHVVEVLTKTAVKSGTAILIKSPLHSLGGFPKGYVMGLFRSYKTKRYVVHHLSMTTSTTNFGEDFLGWIVPFGFMPSYVHKWFQFCRLYIEESDLIISNFKFDDYDFSVEDAYAEVHAEPKGKYSQKAYALLRQYRGIKPVLFVDQYGCDYSGKLADCLQAYGHYSLQDMRQKQSVWLANCDFDIVVAWHVVRDSRFVMRLQTIATICGIKYVAQPTEDVVDGDVVIREPVHLLSADAIVLKLPSLMKVMTHMDDFSIKSIYNVDLCDCGFVMQYGYVDCFNDNCDFYGWVSGNMMDGFSCPLCCTVYDSSEVKAQSSGVIPENPVLFTNSTDTVNHDSFNLYGYSVTPFGSCIYWSPRPGLWIPIIKSSVKSYDDLVYSGVVGCKSIVKETALITHALYLDYVQCKCGNLEQNHILGVNNSWCRQLLLNRGDYNMLLKNIDLFVKRRADFACKFAVCGDGFVPFLLDGLIPRSYYLIQSGIFFTSLMSQFSQEVSDMCLKMCILFMDRVSVATFYIEHYVNRLVTQFKLLGTTLVNKMVNWFNTMLDASAPATGWLLYQLLNGLFVVSQANFNFVALIPDYAKILVNKFYTFFKLLLECVTVDVLKDMPVLKTINGLVCIVGNKFYNVSTGLIPGFVLPCNAQEQQIYFFEGVAESVIVEDDVIENVKSSLSSYEYCQPPKSVEKICIIDNMYMGKCGDKFFPIVMNDKNICLLDQAWRFPCAGRKVNFNEKPVVMEIPSLMTVKVMFDLDSTFDDILGKVCSEFEVEKGVTVDDFVAVVCDAIENALNSCKEHPVVGYQVRAFLNKLNENVVYLFDEAGDEAMASRMYCTFAIEDVEDVISSEAVEDTIDGVVEDTINDDEDVVTGDNDDEDVVTGDNDDEDVVTGDNDDEDVVTGDNDDEDVVTGDNDDEDVVTGDNDDEDVVTGDNDDEDVVTGDNDDEDVVTGDNDDEDVVTGDNDDEDVVTGDNDDEDVVTGDNDDEDVVTGDNDDEDVVTGDNNDEEIVTGDNDDQIVVTGDDVDDIESIYDFDTYKALLVFNDVYNDALFVSYGSSVETETYFKVNGLWSPTITHTNCWLRSVLLVMQKLPFKFKDLAIENMWLSYKVGYNQSFVDYLLTTIPKAIVLPQGGFVADFAYWFLNQFDINAYANWCCLKCGFSFDLNGLDALFFYGDIVSHVCKCGHNMTLIAADLPCTLHFSLFDDNFCAFCTPKKIFIAACAVDVNVCHSVAVIGDEQIDGKFVTKFSGDKFDFIVGYGMSFSMSSFELPQLYGLCITPNVCFVKGDIINVARLVKADVIVNPANGHMLHGGGVAKAIAVAAGKKFSKETAAMVKSKGVCQVGDCYVSTGGKLCKTILNIVGPDARQDGRQSYVLLARAYKHLNNYDCCLSTLISAGIFSVPADVSLTYLLGVVDKQVILVSNNKEDFDIIQKCQITSVVGTKALAVRLTANVGRVIKFETDAYKLFLSGDDCFVSNSSVIQEVLLLRHDIQLNNDVRDYLLSKMTSLPKDWRLINKFDVINGVKTVKYFECPNSIYICSQGKDFGYVCDGSFYKATVNQVCVLLAKKIDVLLTVDGVNFKSISLTVGEVFGKILGNVFCDGIDVTKLKCSDFYADKILYQYENLSLADISAVQSSFGFDQQQLLAYYNFLTVCKWSVVVNGPFFSFEQSHNNCYVNVACLMLQHINLKFNKWQWQEAWYEFRAGRPHRLVALVLAKGHFKFDEPSDATDFIRVVLKQADLSGAICELELICDCGIKQESRVGVDAVMHFGTLAKTDLFNGYKIGCNCAGRIVHCTKLNVPFLICSNTPLSKDLPDDVVAANMFMGVGVGHYTHLKCGSPYQHYDACSVKKYTGVSGCLTDCLYLKNLTQTFTSMLTNYFLDDVEMVAYNPDLSQYYCDNGKYYTKPIIKAQFKPFAKVDGVYTNFKLVGHDICAQLNDKLGFNVDLPFVEYKVTVWPVATGDVVLASDDLYVKRYFKGCETFGKPVIWFCHDEASLNSLTYFNKPSFKSENRYSVLSVDSVSEESQGNVVTSVMESQISTKEVKLKGVRKTVKIEDAIIVNDENSSIKVVKSLSLVDVWDMYLTGCDYVVWVANELSRLVKSPTVREYIRYGIKPITIPIDLLCLRDDNQTLLVPKIFKARAIEFYGFLKWLFIYVFSLLHFTNDKTIFYTTEIASKFTFNLFCLALKNAFQTFRWSIFIKGFLVVATVFLFWFNFLYINVIFSDFYLPNISVFPIFVGRIVMWIKATFGLVTICDFYSKLGVGFTSHFCNGSFICELCHSGFDMLDTYAAIDFVQYEVDRRVLFDYVSLVKLIVELVIGYSLYTVWFYPLFCLIGLQLFTTWLPDLFMLETMHWLIRFIVFVANMLPAFVLLRFYIVVTAMYKVVGFIRHIVYGCNKAGCLFCYKRNCSVRVKCSTIVGGVIRYYDITANGGTGFCVKHQWNCFNCHSFKPGNTFITVEAAIELSKELKRPVNPTDASHYVVTDIKQVGCMMRLFYDRDGQRVYDDVDASLFVDINNLLHSKVKVVPNLYVVVVESDADRANFLNAVVFYAQSLYRPILLVDKKLITTACNGISVTQTMFDVYVDTFMSHFDVDRKSFNNFVNIAHASLREGVQLEKVLDTFVGCVRKCCSIDSDVETRFITKSMISAVAAGLEFTDENYNNLVPTYLKSDNIVAADLGVLIQNGAKHVQGNVAKAANISCIWFIDAFNQLTADLQHKLKKACVKTGLKLKLTFNKQEASVPILTTPFSLKGGVVLSNLLYILFFVSLICFILLWALLPTYSVYKSDIHLPAYASFKVIDNGVVRDISVNDLCFANKFFQFDQWYESTFGSVYYHNSMDCPIVVAVMDEDIGSTMFNVPTKVLRHGFHVLHFLTYAFASDSVQCYTPHIQISYNDFYASGCVLSSLCTMFKRGDGTPHPYCYSDGVMKNASLYTSLVPHTRYSLANSNGFIRFPDVISEGIVRIVRTRSMTYCRVGACEYAEEGICFNFNSSWVLNNDYYRSMPGTFCGRDLFDLFYQFFSSLIRPIDFFSLTASSIFGAILAIVVVLVFYYLIKLKRAFGDYTSVVVINVVVWCINFLMLFVFQVYPICACVYACFYFYVTLYFPSEISVIMHLQWIVMYGAIMPFWFCVTYVAMVIANHVLWLFSYCRKIGVNVCSDSTFEETSLTTFMITKDSYCRLKNSVSDVAYNRYLSLYNKYRYYSGKMDTAAYREAACSQLAKAMETFNHNNGNDVLYQPPTASVSTSFLQSGIVKMVSPTSKIEPCIVSVTYGSMTLNGLWLDDKVYCPRHVICSSSNMNEPDYSALLCRVTLGDFTIMSGRMSLTVVSYQMQGCQLVLTVSLQNPYTPKYTFGNVKPGETFTVLAAYNGRPQGAFHVTMRSSYTIKGSFLCGSCGSVGYVLTGDSVKFVYMHQLELSTGCHTGTDFTGNFYGPYRDAQVVQLPVKDYVQTVNVIAWLYAAILNNCAWFVQNDVCSTEDFNVWAMANGFSQVKADLVLDALASMTGVSIETLLAAIKRLYMGFQGRQILGSCTFEDELAPSDVYQQLAGVKLQSKTKRFIKETIYWILISTFLFSCIISAFVKWTIFMYINTHMIGVTLCVLCFVSFMMLLVKHKHFYLTMYIIPVLCTLFYVNYLVVYKEGFRGFTYVWLSYFVPAVNFTYVYEVFYGCILCVFAIFITMHSINHDIFSLMFLVGRIVTLISMWYFGSNLEEDVLLFITAFLGTYTWTTILSLAIAKIVANWLSVNIFYFTDVPYIKLILLSYLFIGYILSCYWGFFSLLNSVFRMPMGVYNYKISVQELRYMNANGLRPPRNSFEAILLNLKLLGIGGVPVIEVSQIQSKLTDVKCANVVLLNCLQHLHVASNSKLWQYCSVLHNEILSTSDLSVAFDKLAQLLIVLFANPAAVDTKCLASIDEVSDDYVQDSTVLQALQSEFVNMASFVEYEVAKKNLADAKNSGSVNQQQIKQLEKACNIAKSVYERDKAVARKLERMADLALTNMYKEARINDKKSKVVSALQTMLFSMVRKLDNQALNSILDNAVKGCVPLSAIPALAANTLTIVIPDKQVFDKVVDNVYVTYAGSVWHIQTVQDADGINKQLTDISVDSNWPLVIIANRYNEVANAVMQNNELMPHKLKIQVVNSGSDMNCNIPTQCYYNNGSSGRIVYAVLSDVDGLKYTKIMKDDGNCVVLELDPPCKFSIQDVKGLKIKYLYFIKGCNTLARGWVVGTLSSTIRLQAGVATEYAANSSILSLCAFSVDPKKTYLDYIQQGGVPIINCVKMLCDHAGTGMAITIKPEATINQDSYGGASVCIYCRARVEHPDVDGICKLRGKFVQVPLGIKDPILYVLTHDVCQVCGFWRDGSCSCVGSSVAVQSKDLNFLNRVRGTSVNARLVPCASGLSTDVQLRAFDICNTNRAGIGLYYKVNCCRFQRIDDDGNKLDKFFVVKRTNLEVYNKEKTYYELTKSCGVVAEHDFFTFDIDGSRVPHIVRRNLSKYTMLDLCYALRHFDRNDCSILCEILCEYADCKESYFSKKDWYDFVENPDIINIYKKLGPIFNRALLNTVIFADTLVEVGLVGVLTLDNQDLYGQWYDFGDFIQTAPGFGVAVADSYYSYMMPMLTMCHVLDCELFVNDSYRQFDLVQYDFTDYKLELFNKYFKYWGMKYHPNTVDCDNDRCIIHCANFNILFSMVLPNTCFGPLVRQIFVDGVPFVVSIGYHYKELGVVMNLDVDTHRYRLSLKDLLLYAADPAMHVASASALLDLRTCCFSVAAITSGIKFQTVKPGNFNQDFYEFVKSKGLFKEGSTVDLKHFFFTQDGNAAITDYNYYKYNLPTMVDIKQLLFVLEVVYKYFEIYDGGCIPASQVIVNNYDKSAGYPFNKFGKARLYYEALSFEEQNEIYAYTKRNVLPTLTQMNLKYAISAKNRARTVAGVSILSTMTGRMFHQKCLKSIAATRGVPVVIGTTKFYGGWDDMLRHLIKDVDNPVLMGWDYPKCDRAMPNILRIVSSLVLARKHEFCCSHGDRFYRLANECAQVLSEIVMCGGCYYVKPGGTSSGDATTAFANSVFNICQAVTANVCSLMACNGHKIEDLSIRNLQKRLYSNVYRTDYVDYTFVNEYYEFLCKHFSMMILSDDGVVCYNSDYASKGYIANISVFQQVLYYQNNVFMSESKCWVENDITNGPHEFCSQHTMLVKIDGDYVYLPYPDPSRILGAGCFVDDLLKTDSVLLIERFVSLAIDAYPLVHHENEEYQKVFRVYLEYIKKLYNDLGTQILDSYSVILSTCDGLKFTEESFYKNMYLKSAVMQSVGACVVCSSQTSLRCGSCIRKPLLCCKCCYDHVMATNHKYVLSVSPYVCNAPNCDVSDVTKLYLGGMSYYCENHKPHYSFKLVMNGMVFGLYKQSCTGSPYIDDFNKIASCKWTEVDDYVLANECIERLKLFAAETQKATEEAFKQSYASATIQEIVSDREVILCWETGKVKPPLNKNYVFTGYHFTSTGKTVLGEYVFDKSELTNGVYYRATTTYKLSIGDVFVLTSHSVASLSAPTLVPQENYASIRFSSVYSVPLVFQNNVANYQHIGMKRYCTVQGPPGTGKSHLAIGLAVYYYTARVVYTAASHAAVDALCEKAYKFLNINDCTRIIPAKVRVDCYDKFKINDTTCKYVFTTINALPELVTDIVVVDEVSMLTNYELSVINARIKAKHYVYIGDPAQLPAPRVLLSKGSLEPRHFNSITKIMCCLGPDIFLGNCYRCPKEIVETVSALVYDNKLKAKNDNSSLCFKVYFKGQTTHESSSAVNIQQIYLISKFLKANPVWNSAVFISPYNSQNYVAKRVLGVQTQTVDSAQGSEYDYVIYSQTAETAHSVNVNRFNVAITRAKKGIFCVMSNMQLFESLNFITLPLDKIQNQTLPRLHCTTNLFKDCSKSCLGYHPAHAPSFLAVDDKYKVNENLAVNLNICEPVLTYSRLISLMGFKLDLTLDGYSKLFITKDEAIKRVRGWVGFDVEGAHATRENIGTNFPLQIGFSTGVDFVVEATGLFAERDCYTFKKTVAKAPPGEKFKHLIPLMSKGQKWDIVRIRIVQMLSDYLLDLSDSVVFITWSASFELTCLRYFAKLGRELNCNVCSNRATCYNSRTGYYGCWRHSYTCDYVYNPLIVDIQQWGYTGSLTSNHDIICNVHKGAHVASADAIMTRCLAIYDCFCKSVNWNLEYPIISNEVSINTSCRLLQRVMLKAAMLCNRYNLCYDIGNPKGLACVKDYEFKFYDAFPVAKSVKQLFYVYDVHKDNFKDGLCMFWNCNVDKYPSNSIVCRFDTRVLNKLNLPGCNGGSLYVNKHAFHTNPFTRTVFENLKPMPFFYYSDTPCVYVDGLESKQVDYVPLRSATCITRCNLGGAVCSKHAEEYCNYLESYNIVTTAGFTFWVYKNFDFYNLWNTFTTLQSLENVIYNLVNVGHYDGRTGELPCAIMNDKVVVKINNVDTVIFKNNTSFPTNIAVELFTKRSIRHHPELKILRNLNIDICWKHVLWDYVKDSLFCSSTYGVCKYTDLKFIENLNILFDGRDTGALEAFRKARNGVFISTEKLSRLSMIKGPQRADLNGVIVDKVGELKVEFWFAMRKDGDDVIFSRTDSLCSSHYWSPQGNLGGNCAGNVIGNDALTRFTIFTQSRVLSSFEPRSDLERDFIDMDDNLFIAKYGLEDYAFDHIVYGSFNHKVIGGLHLLIGLFRRKKKSNLLIQEFLQYDSSIHSYFITDQECGSSKSVCTVIDLLLDDFVSIVKSLNLSCVSKVVNINVDFKDFQFMLWCNDNKIMTFYPKMQATNDWKPGYSMPVLYKYLNVPLERVSLWNYGKPINLPTGCMMNVAKYTQLCQYLNTTTLAVPVNMRVLHLGAGSDKEVAPGSAVLRQWLPSGSILVDNDLNPFVSDSLVTYFGDCMTLPFDCHWDLIISDMYDPLTKNIGDYNVSKDGFFTYICHLIRDKLSLGGSVAIKITEFSWNADLYKLMSCFAFWTVFCTNVNASSSEGFLIGINYLGKSSFEIDGNVMHANYLFWRNSTTWNGGAYSLFDMTKFSLKLAGTAVVNLRPDQLNDLVYSLIERGKLLVRDTRKEIFVGDSLVNTC.

The CoV Nsp1 globular domain maps to 54–174 (YDNHVKIDCR…HKWFQFCRLY (121 aa)). The 31-residue stretch at 192–222 (FSVEDAYAEVHAEPKGKYSQKAYALLRQYRG) folds into the BetaCoV Nsp1 C-terminal domain. The CoV Nsp2 N-terminal domain occupies 226–488 (VLFVDQYGCD…LITHALYLDY (263 aa)). 4 residues coordinate Zn(2+): cysteine 365, cysteine 370, cysteine 386, and cysteine 389. A C4 region spans residues 365–389 (CFNDNCDFYGWVSGNMMDGFSCPLC). A CoV Nsp2 middle domain is found at 493 to 681 (CGNLEQNHIL…VNKFYTFFKL (189 aa)). The region spanning 697-809 (LKTINGLVCI…LDQAWRFPCA (113 aa)) is the CoV Nsp2 C-terminal domain. Residues 811–923 (RKVNFNEKPV…MYCTFAIEDV (113 aa)) enclose the Ubiquitin-like 1 domain. 14 consecutive repeat copies span residues 945–954 (NDDEDVVTGD), 955–964 (NDDEDVVTGD), 965–974 (NDDEDVVTGD), 975–984 (NDDEDVVTGD), 985–994 (NDDEDVVTGD), 995–1004 (NDDEDVVTGD), 1005–1014 (NDDEDVVTGD), 1015–1024 (NDDEDVVTGD), 1025–1034 (NDDEDVVTGD), 1035–1044 (NDDEDVVTGD), 1045–1054 (NDDEDVVTGD), 1055–1064 (NDDEDVVTGD), 1065–1074 (NDDEDVVTGD), and 1075–1084 (NDDEDVVTGD). Residues 945 to 1084 (NDDEDVVTGD…NDDEDVVTGD (140 aa)) are 14 X 10 AA tandem repeat of N-[DN]-D-E-D-V-V-T-G-D. The segment at 946–1064 (DDEDVVTGDN…NDDEDVVTGD (119 aa)) is disordered. Residues 1123 to 1373 (VFNDVYNDAL…VCFVKGDIIN (251 aa)) enclose the Peptidase C16 1 domain. Catalysis depends on cysteine 1161, which acts as the For PL1-PRO activity. Positions 1238, 1241, 1264, and 1266 each coordinate Zn(2+). The C4-type 1 zinc finger occupies 1238-1266 (CLKCGFSFDLNGLDALFFYGDIVSHVCKC). Active-site for PL1-PRO activity residues include histidine 1312 and aspartate 1323. One can recognise a Macro domain in the interval 1351–1522 (ELPQLYGLCI…IIQKCQITSV (172 aa)). In terms of domain architecture, DPUP spans 1578–1649 (NDVRDYLLSK…TVNQVCVLLA (72 aa)). The Ubiquitin-like 2 domain maps to 1649–1704 (AKKIDVLLTVDGVNFKSISLTVGEVFGKILGNVFCDGIDVTKLKCSDFYADKILYQ). A Peptidase C16 2 domain is found at 1718 to 1978 (SSFGFDQQQL…MVAYNPDLSQ (261 aa)). Cysteine 1757 acts as the For PL2-PRO activity in catalysis. Residues cysteine 1835, cysteine 1837, cysteine 1869, and cysteine 1871 each contribute to the Zn(2+) site. The C4-type 2 zinc finger occupies 1835–1871 (CDCGIKQESRVGVDAVMHFGTLAKTDLFNGYKIGCNC). Active-site for PL2-PRO activity residues include histidine 1914 and aspartate 1928. The Nucleic acid-binding domain occupies 1992–2093 (IKAQFKPFAK…TYFNKPSFKS (102 aa)). In terms of domain architecture, G2M spans 2108–2257 (ESQGNVVTSV…NDKTIFYTTE (150 aa)). A run of 3 helical transmembrane segments spans residues 2226 to 2246 (AIEFYGFLKWLFIYVFSLLHF), 2287 to 2307 (FLVVATVFLFWFNFLYINVIF), and 2318 to 2338 (FPIFVGRIVMWIKATFGLVTI). Residues 2226–2463 (AIEFYGFLKW…FVLLRFYIVV (238 aa)) form an HD1 region. Positions 2323 to 2384 (GRIVMWIKAT…AIDFVQYEVD (62 aa)) constitute a 3Ecto domain. Cystine bridges form between cysteine 2339/cysteine 2363 and cysteine 2354/cysteine 2360. Helical transmembrane passes span 2401–2421 (LVIGYSLYTVWFYPLFCLIGL) and 2443–2463 (FIVFVANMLPAFVLLRFYIVV). Residues 2471 to 2561 (GFIRHIVYGC…ELKRPVNPTD (91 aa)) are Y1. The CoV Nsp3 Y domain occupies 2471–2838 (GFIRHIVYGC…LTTPFSLKGG (368 aa)). Histidine 2475, cysteine 2480, cysteine 2485, cysteine 2488, cysteine 2521, histidine 2524, cysteine 2528, and cysteine 2531 together coordinate Zn(2+). Residues 2475–2488 (HIVYGCNKAGCLFC) are ZF1. Positions 2521 to 2531 (CVKHQWNCFNC) are ZF2. The Y2 stretch occupies residues 2562-2654 (ASHYVVTDIK…LVDKKLITTA (93 aa)). Residues 2562–2838 (ASHYVVTDIK…LTTPFSLKGG (277 aa)) form a coV-Y region. A Y3 region spans residues 2655 to 2737 (CNGISVTQTM…KSMISAVAAG (83 aa)). The segment at 2738 to 2838 (LEFTDENYNN…LTTPFSLKGG (101 aa)) is Y4. A run of 5 helical transmembrane segments spans residues 2844–2864 (LLYILFFVSLICFILLWALLP), 3119–3139 (ASSIFGAILAIVVVLVFYYLI), 3151–3171 (VVVINVVVWCINFLMLFVFQV), 3178–3198 (VYACFYFYVTLYFPSEISVIM), and 3203–3223 (IVMYGAIMPFWFCVTYVAMVI). The HD2 stretch occupies residues 2844–3223 (LLYILFFVSL…FCVTYVAMVI (380 aa)). The 98-residue stretch at 3237–3334 (IGVNVCSDST…TASVSTSFLQ (98 aa)) folds into the Nsp4C domain. One can recognise a Peptidase C30 domain in the interval 3335–3637 (SGIVKMVSPT…YQQLAGVKLQ (303 aa)). Active-site for 3CL-PRO activity residues include histidine 3375 and cysteine 3479. 7 helical membrane passes run 3651 to 3671 (ILISTFLFSCIISAFVKWTIF), 3676 to 3696 (THMIGVTLCVLCFVSFMMLLV), 3701 to 3721 (FYLTMYIIPVLCTLFYVNYLV), 3744 to 3764 (FTYVYEVFYGCILCVFAIFIT), 3772 to 3792 (IFSLMFLVGRIVTLISMWYFG), 3800 to 3820 (LLFITAFLGTYTWTTILSLAI), and 3843 to 3863 (LILLSYLFIGYILSCYWGFFS). The tract at residues 3651 to 3863 (ILISTFLFSC…ILSCYWGFFS (213 aa)) is HD3. The region spanning 3925–4013 (SKLTDVKCAN…DYVQDSTVLQ (89 aa)) is the RdRp Nsp7 cofactor domain. The 197-residue stretch at 4014 to 4210 (ALQSEFVNMA…YNEVANAVMQ (197 aa)) folds into the RdRp Nsp8 cofactor domain. One can recognise a Nsp9 ssRNA-binding domain in the interval 4211–4320 (NNELMPHKLK…GTLSSTIRLQ (110 aa)). The ExoN/MTase coactivator domain occupies 4321-4458 (AGVATEYAAN…CVGSSVAVQS (138 aa)). 8 residues coordinate Zn(2+): cysteine 4394, cysteine 4397, histidine 4403, cysteine 4410, cysteine 4436, cysteine 4439, cysteine 4447, and cysteine 4449. Zinc fingers lie at residues 4394–4410 (CIYCRARVEHPDVDGIC) and 4436–4449 (CQVCGFWRDGSCSC). A NiRAN domain is found at 4463–4718 (FLNRVRGTSV…DCELFVNDSY (256 aa)). Residues asparagine 4666 and aspartate 4675 each coordinate Mn(2+). In terms of domain architecture, Nsp12 Interface spans 4719-4817 (RQFDLVQYDF…MNLDVDTHRY (99 aa)). Histidine 4748, cysteine 4754, cysteine 4759, cysteine 4763, and cysteine 4940 together coordinate Zn(2+). The Nsp12 RNA-dependent RNA polymerase domain occupies 4818–5385 (RLSLKDLLLY…NMYLKSAVMQ (568 aa)). A rdRp Fingers N-ter region spans residues 4820–5034 (SLKDLLLYAA…HQKCLKSIAA (215 aa)). The segment at 5035–5073 (TRGVPVVIGTTKFYGGWDDMLRHLIKDVDNPVLMGWDYP) is rdRp Palm N-ter. Positions 5065 to 5227 (PVLMGWDYPK…CYNSDYASKG (163 aa)) constitute a RdRp catalytic domain. A rdRp Fingers C-ter region spans residues 5074–5132 (KCDRAMPNILRIVSSLVLARKHEFCCSHGDRFYRLANECAQVLSEIVMCGGCYYVKPGG). Zn(2+) contacts are provided by histidine 5095, cysteine 5098, and cysteine 5099. The segment at 5133–5268 (TSSGDATTAF…TNGPHEFCSQ (136 aa)) is rdRp Palm C-ter. Residues serine 5212, aspartate 5213, and aspartate 5214 contribute to the active site. Residues 5269 to 5385 (HTMLVKIDGD…NMYLKSAVMQ (117 aa)) are rdRp Thumb. Positions 5386 to 5498 (SVGACVVCSS…DDFNKIASCK (113 aa)) constitute a CV ZBD domain. Zn(2+)-binding residues include cysteine 5390, cysteine 5393, cysteine 5401, cysteine 5404, cysteine 5411, cysteine 5414, histidine 5418, histidine 5424, cysteine 5435, cysteine 5440, cysteine 5457, and histidine 5460. In terms of domain architecture, (+)RNA virus helicase ATP-binding spans 5641-5822 (SVPLVFQNNV…MCCLGPDIFL (182 aa)). 5666–5673 (GPPGTGKS) lines the ATP pocket. A (+)RNA virus helicase C-terminal domain is found at 5823 to 5992 (GNCYRCPKEI…TLPRLHCTTN (170 aa)). One can recognise an ExoN domain in the interval 6059-6274 (LFITKDEAIK…RCLAIYDCFC (216 aa)). Active-site residues include aspartate 6077, glutamate 6079, and glutamate 6178. Zn(2+) is bound by residues cysteine 6194, cysteine 6197, cysteine 6213, histidine 6216, histidine 6244, cysteine 6248, and histidine 6251. Active-site residues include histidine 6255 and aspartate 6260. Residue cysteine 6266 participates in Zn(2+) binding. An N7-MTase domain is found at 6283-6509 (YPIISNEVSI…NLWNTFTTLQ (227 aa)). 6318-6324 (DIGNPKG) contacts S-adenosyl-L-methionine. The tract at residues 6396–6410 (CNGGSLYVNKHAFHT) is gpppA-binding. Residues cysteine 6434, cysteine 6455, cysteine 6466, and histidine 6469 each contribute to the Zn(2+) site. One can recognise a Nsp15 N-terminal oligomerization domain in the interval 6510 to 6570 (SLENVIYNLV…NIAVELFTKR (61 aa)). In terms of domain architecture, AV-Nsp11N/CoV-Nsp15M spans 6571-6691 (SIRHHPELKI…FAMRKDGDDV (121 aa)). The NendoU domain occupies 6741 to 6880 (EPRSDLERDF…NDNKIMTFYP (140 aa)). Active-site residues include histidine 6771, histidine 6786, lysine 6826, lysine 6929, aspartate 7013, lysine 7053, and glutamate 7086. The 295-residue stretch at 6885–7179 (TNDWKPGYSM…KEIFVGDSLV (295 aa)) folds into the Nidovirus-type SAM-dependent 2'-O-MTase domain.

The protein belongs to the coronaviruses polyprotein 1ab family. In terms of assembly, interacts with host PHB and PHB2. As to quaternary structure, interacts with papain-like protease nsp3 and non-structural protein 6. Monomer. Homodimer. Only the homodimer shows catalytic activity. In terms of assembly, interacts with nsp8 and nsp12 to form the replication-transcription complex (RTC): nsp12, nsp7, two subunits of nsp8, and up to two subunits of nsp13. As to quaternary structure, interacts with nsp7, nsp13 and nsp12 to form the replication-transcription complex (RTC): nsp12, nsp7, two subunits of nsp8, and up to two subunits of nsp13. Interacts with nsp12. In terms of assembly, interacts with proofreading exoribonuclease nsp14 and 2'-O-methyltransferase nsp16; these interactions enhance nsp14 and nsp16 enzymatic activities. As to quaternary structure, interacts with nsp7 and nsp8 to form the replication-transcription complex (RTC): nsp12, nsp7, two subunits of nsp8, and up to two subunits of nsp13. Interacts with nsp9. Interacts with nsp8 to form the replication-transcription complex (RTC): nsp12, nsp7, two subunits of nsp8, and up to two subunits of nsp13. The cofactor is Mn(2+). Mg(2+) is required as a cofactor. Specific enzymatic cleavages in vivo by its own proteases yield mature proteins. 3CL-PRO and PL-PRO proteinases are autocatalytically processed.

The protein resides in the host membrane. Its subcellular location is the host cytoplasm. The protein localises to the host perinuclear region. It is found in the host endoplasmic reticulum-Golgi intermediate compartment. The catalysed reaction is RNA(n) + a ribonucleoside 5'-triphosphate = RNA(n+1) + diphosphate. The enzyme catalyses ATP + H2O = ADP + phosphate + H(+). It catalyses the reaction Thiol-dependent hydrolysis of ester, thioester, amide, peptide and isopeptide bonds formed by the C-terminal Gly of ubiquitin (a 76-residue protein attached to proteins as an intracellular targeting signal).. It carries out the reaction a 5'-end (N(7)-methyl 5'-triphosphoguanosine)-ribonucleoside in mRNA + S-adenosyl-L-methionine = a 5'-end (N(7)-methyl 5'-triphosphoguanosine)-(2'-O-methyl-ribonucleoside) in mRNA + S-adenosyl-L-homocysteine + H(+). The catalysed reaction is uridylyl-uridylyl-ribonucleotide-RNA = a 3'-end uridylyl-2',3'-cyclophospho-uridine-RNA + a 5'-end dephospho-ribonucleoside-RNA. The enzyme catalyses a 5'-end diphospho-ribonucleoside in mRNA + GTP + H(+) = a 5'-end (5'-triphosphoguanosine)-ribonucleoside in mRNA + diphosphate. It catalyses the reaction a 5'-end (5'-triphosphoguanosine)-ribonucleoside in mRNA + S-adenosyl-L-methionine = a 5'-end (N(7)-methyl 5'-triphosphoguanosine)-ribonucleoside in mRNA + S-adenosyl-L-homocysteine. Its function is as follows. The replicase polyprotein of coronaviruses is a multifunctional protein: it contains the activities necessary for the transcription of negative stranded RNA, leader RNA, subgenomic mRNAs and progeny virion RNA as well as proteinases responsible for the cleavage of the polyprotein into functional products. Inhibits host translation by interacting with the 40S ribosomal subunit. The nsp1-40S ribosome complex further induces an endonucleolytic cleavage near the 5'UTR of host mRNAs, targeting them for degradation. Viral mRNAs are not susceptible to nsp1-mediated endonucleolytic RNA cleavage thanks to the presence of a 5'-end leader sequence and are therefore protected from degradation. By suppressing host gene expression, nsp1 facilitates efficient viral gene expression in infected cells and evasion from host immune response. Functionally, may play a role in the modulation of host cell survival signaling pathway by interacting with host PHB and PHB2. Indeed, these two proteins play a role in maintaining the functional integrity of the mitochondria and protecting cells from various stresses. In terms of biological role, responsible for the cleavages located at the N-terminus of the replicase polyprotein. In addition, PL-PRO possesses a deubiquitinating/deISGylating activity and processes both 'Lys-48'- and 'Lys-63'-linked polyubiquitin chains from cellular substrates. Participates together with nsp4 in the assembly of virally-induced cytoplasmic double-membrane vesicles necessary for viral replication. Antagonizes innate immune induction of type I interferon by blocking the phosphorylation, dimerization and subsequent nuclear translocation of host IRF3. Also prevents host NF-kappa-B signaling. Its function is as follows. Participates in the assembly of virally-induced cytoplasmic double-membrane vesicles necessary for viral replication. Cleaves the C-terminus of replicase polyprotein at 11 sites. Recognizes substrates containing the core sequence [ILMVF]-Q-|-[SGACN]. Also able to bind an ADP-ribose-1''-phosphate (ADRP). Functionally, plays a role in the initial induction of autophagosomes from host endoplasmic reticulum. Later, limits the expansion of these phagosomes that are no longer able to deliver viral components to lysosomes. In terms of biological role, forms a hexadecamer with nsp8 (8 subunits of each) that may participate in viral replication by acting as a primase. Alternatively, may synthesize substantially longer products than oligonucleotide primers. Its function is as follows. Forms a hexadecamer with nsp7 (8 subunits of each) that may participate in viral replication by acting as a primase. Alternatively, may synthesize substantially longer products than oligonucleotide primers. Forms a primer, NSP9-pU, which is utilized by the polymerase for the initiation of RNA chains. Interacts with ribosome signal recognition particle RNA (SRP). Together with NSP8, suppress protein integration into the cell membrane, thereby disrupting host immune defenses. Functionally, plays a pivotal role in viral transcription by stimulating both nsp14 3'-5' exoribonuclease and nsp16 2'-O-methyltransferase activities. Therefore plays an essential role in viral mRNAs cap methylation. In terms of biological role, RNA-directed RNA polymerase that catalyzes the transcription of viral genomic and subgenomic RNAs. Acts in complex with nsp7 and nsp8 to transcribe both the minus and positive strands of genomic RNA. The kinase-like NiRAN domain of NSP12 attaches one or more nucleotides to the amino terminus of NSP9, forming a covalent RNA-protein intermediate that serves as transcription/replication primer. Subgenomic RNAs (sgRNAs) are formed by discontinuous transcription: The polymerase has the ability to pause at transcription-regulating sequences (TRS) and jump to the leader TRS, resulting in a major deletion. This creates a series of subgenomic RNAs that are replicated, transcribed and translated. In addition, Nsp12 is a subunit of the viral RNA capping enzyme that catalyzes the RNA guanylyltransferase reaction for genomic and sub-genomic RNAs. Subsequently, the NiRAN domain transfers RNA to GDP, and forms the core cap structure GpppA-RNA. Its function is as follows. Multi-functional protein with a zinc-binding domain in N-terminus displaying RNA and DNA duplex-unwinding activities with 5' to 3' polarity. Activity of helicase is dependent on magnesium. Plays a role in viral RNA synthesis through two distinct activities. The N7-guanine methyltransferase activity plays a role in the formation of the cap structure GpppA-RNA. The proofreading exoribonuclease reduces the sensitivity of the virus to RNA mutagens during replication. This activity acts on both ssRNA and dsRNA in a 3'-5' direction. Functionally, plays a role in viral transcription/replication and prevents the simultaneous activation of host cell dsRNA sensors, such as MDA5/IFIH1, OAS, and PKR. Acts by degrading the 5'-polyuridines generated during replication of the poly(A) region of viral genomic and subgenomic RNAs. Catalyzes a two-step reaction in which a 2'3'-cyclic phosphate (2'3'-cP) is first generated by 2'-O transesterification, which is then hydrolyzed to a 3'-phosphate (3'-P). If not degraded, poly(U) RNA would hybridize with poly(A) RNA tails and activate host dsRNA sensors. In terms of biological role, methyltransferase that mediates mRNA cap 2'-O-ribose methylation to the 5'-cap structure of viral mRNAs. N7-methyl guanosine cap is a prerequisite for binding of nsp16. Therefore plays an essential role in viral mRNAs cap methylation which is essential to evade immune system. The polypeptide is Replicase polyprotein 1ab (rep) (Human coronavirus HKU1 (isolate N1) (HCoV-HKU1)).